A 273-amino-acid chain; its full sequence is 2,3,4,5-tetrahydropyridine-2,6-dicarboxylate N-succinyltransferase (273 aa).

2 residues coordinate substrate: arginine 104 and aspartate 141.

This sequence belongs to the transferase hexapeptide repeat family. In terms of assembly, homotrimer.

Its subcellular location is the cytoplasm. The enzyme catalyses (S)-2,3,4,5-tetrahydrodipicolinate + succinyl-CoA + H2O = (S)-2-succinylamino-6-oxoheptanedioate + CoA. The protein operates within amino-acid biosynthesis; L-lysine biosynthesis via DAP pathway; LL-2,6-diaminopimelate from (S)-tetrahydrodipicolinate (succinylase route): step 1/3. The sequence is that of 2,3,4,5-tetrahydropyridine-2,6-dicarboxylate N-succinyltransferase from Azoarcus sp. (strain BH72).